Reading from the N-terminus, the 55-residue chain is Large ribosomal subunit protein bL33 (55 aa).

Belongs to the bacterial ribosomal protein bL33 family.

The polypeptide is Large ribosomal subunit protein bL33 (Vibrio cholerae serotype O1 (strain ATCC 39541 / Classical Ogawa 395 / O395)).